We begin with the raw amino-acid sequence, 456 residues long: PTS system sucrose-specific EIIBC component (456 aa).

One can recognise a PTS EIIB type-1 domain in the interval 4–87 (EQISCSLLPL…TQAAGISESS (84 aa)). Catalysis depends on Cys-26, which acts as the Phosphocysteine intermediate; for EIIB activity. The region spanning 107–456 (RLLSNIFVPI…LVLKYKTDAE (350 aa)) is the PTS EIIC type-1 domain. 10 consecutive transmembrane segments (helical) span residues 112 to 132 (IFVP…LLGM), 144 to 164 (AIYI…PILI), 181 to 201 (TLGG…AAGF), 213 to 233 (MIGY…MSIV), 247 to 267 (LILT…LIIG), 288 to 308 (AGWL…ITGI), 329 to 349 (FLLP…LAVW), 360 to 380 (ITLP…IFGI), 388 to 408 (FIAA…VHVY), and 428 to 448 (LLNY…VSLV).

It localises to the cell inner membrane. The catalysed reaction is N(pros)-phospho-L-histidyl-[protein](out) + sucrose = sucrose 6(G)-phosphate(in) + L-histidyl-[protein]. The phosphoenolpyruvate-dependent sugar phosphotransferase system (sugar PTS), a major carbohydrate active transport system, catalyzes the phosphorylation of incoming sugar substrates concomitantly with their translocation across the cell membrane. This system is involved in sucrose transport. The polypeptide is PTS system sucrose-specific EIIBC component (Salmonella typhimurium).